The sequence spans 190 residues: Holliday junction branch migration complex subunit RuvA (190 aa).

The domain I stretch occupies residues 1–64; that stretch reads MIGKLTGTLL…EDAQLLYGFG (64 aa). Positions 65–143 are domain II; that stretch reads THSERQAFRE…ADTGAQSLFV (79 aa). The tract at residues 144–148 is flexible linker; it reads NNDQN. The domain III stretch occupies residues 148–190; it reads NDIVQALMALGYSDKDAAAALKKLPPDVGVTEGIKLALKALAK.

It belongs to the RuvA family. Homotetramer. Forms an RuvA(8)-RuvB(12)-Holliday junction (HJ) complex. HJ DNA is sandwiched between 2 RuvA tetramers; dsDNA enters through RuvA and exits via RuvB. An RuvB hexamer assembles on each DNA strand where it exits the tetramer. Each RuvB hexamer is contacted by two RuvA subunits (via domain III) on 2 adjacent RuvB subunits; this complex drives branch migration. In the full resolvosome a probable DNA-RuvA(4)-RuvB(12)-RuvC(2) complex forms which resolves the HJ.

The protein localises to the cytoplasm. Its function is as follows. The RuvA-RuvB-RuvC complex processes Holliday junction (HJ) DNA during genetic recombination and DNA repair, while the RuvA-RuvB complex plays an important role in the rescue of blocked DNA replication forks via replication fork reversal (RFR). RuvA specifically binds to HJ cruciform DNA, conferring on it an open structure. The RuvB hexamer acts as an ATP-dependent pump, pulling dsDNA into and through the RuvAB complex. HJ branch migration allows RuvC to scan DNA until it finds its consensus sequence, where it cleaves and resolves the cruciform DNA. This chain is Holliday junction branch migration complex subunit RuvA, found in Delftia acidovorans (strain DSM 14801 / SPH-1).